A 339-amino-acid polypeptide reads, in one-letter code: Probable thylakoid lumen protein sll0997 (339 aa).

The signal sequence occupies residues 1 to 26 (MAPYQSFHIGLLGLALASVWPLSACA).

It localises to the cellular thylakoid lumen. The sequence is that of Probable thylakoid lumen protein sll0997 from Synechocystis sp. (strain ATCC 27184 / PCC 6803 / Kazusa).